Consider the following 752-residue polypeptide: Glutamate carboxypeptidase 2 (752 aa).

Topologically, residues 1-19 (MWNAQQDSDSAEALGRRQR) are cytoplasmic. Residue S10 is modified to Phosphoserine. A helical; Signal-anchor for type II membrane protein membrane pass occupies residues 20–44 (WFCAGTLVLAFTGTFIIGFLFGWFI). Residues 45–752 (KPSNDSTSSV…AAAETLREVD (708 aa)) lie on the Extracellular side of the membrane. N48, N78, N123, N155, and N197 each carry an N-linked (GlcNAc...) asparagine glycan. Substrate is bound by residues R212 and N259. T271 and Y274 together coordinate Ca(2+). An NAALADase region spans residues 276 to 589 (ANEYAYRHEF…QVRGAMVFEL (314 aa)). The N-linked (GlcNAc...) asparagine glycan is linked to N338. The Zn(2+) site is built by H379 and D389. E426 contributes to the substrate binding site. Residue E426 is the Nucleophile; for NAALADase activity of the active site. Position 427 (E427) interacts with Zn(2+). Ca(2+) contacts are provided by E435 and E438. D455 serves as a coordination point for Zn(2+). 2 N-linked (GlcNAc...) asparagine glycosylation sites follow: N461 and N478. Residues 519–520 (SG), N521, 536–538 (RAR), Y554, and 554–555 (YH) each bind substrate. H555 provides a ligand contact to Zn(2+). A glycan (N-linked (GlcNAc...) asparagine) is linked at N615. Catalysis depends on S630, which acts as the Charge relay system. N640 carries N-linked (GlcNAc...) asparagine glycosylation. Active-site charge relay system residues include D668 and H691. Residue 701-702 (KY) coordinates substrate.

This sequence belongs to the peptidase M28 family. M28B subfamily. In terms of assembly, homodimer. Requires Zn(2+) as cofactor. As to expression, widely expressed throughout brain regions with highest levels in the hippocampus, dentate gyrus, priform cortex, choroid plexus of ventricles, pineal gland, anterior lobe of the pituitary gland and supraoptic nucleus. High levels also found in the cerebral cortex, substantia nigra, pontine nucleus and the granule cell layer of cerebellum. Highly expressed in astrocytes and non-myelinating Schwann cells. Also expressed in kidney, localizing to the proximal brush border of the renal tube.

The protein resides in the cell membrane. The enzyme catalyses Release of an unsubstituted, C-terminal glutamyl residue, typically from Ac-Asp-Glu or folylpoly-gamma-glutamates.. Its activity is regulated as follows. The NAALADase activity is inhibited by beta-NAAG, quisqualic acid and 2-(phosphonomethyl)glutaric acid (PMG). Functionally, has both folate hydrolase and N-acetylated-alpha-linked-acidic dipeptidase (NAALADase) activity. Has a preference for tri-alpha-glutamate peptides. In the intestine, required for the uptake of folate. In the brain, modulates excitatory neurotransmission through the hydrolysis of the neuropeptide, N-aceylaspartylglutamate (NAAG), thereby releasing glutamate. Its function is as follows. Also exhibits a dipeptidyl-peptidase IV type activity. In vitro, cleaves Gly-Pro-AMC. This chain is Glutamate carboxypeptidase 2 (Folh1), found in Rattus norvegicus (Rat).